Consider the following 454-residue polypeptide: UDP-N-acetylmuramoylalanine--D-glutamate ligase (454 aa).

115–121 (GTNGKTT) is an ATP binding site.

It belongs to the MurCDEF family.

The protein localises to the cytoplasm. The catalysed reaction is UDP-N-acetyl-alpha-D-muramoyl-L-alanine + D-glutamate + ATP = UDP-N-acetyl-alpha-D-muramoyl-L-alanyl-D-glutamate + ADP + phosphate + H(+). It participates in cell wall biogenesis; peptidoglycan biosynthesis. Its function is as follows. Cell wall formation. Catalyzes the addition of glutamate to the nucleotide precursor UDP-N-acetylmuramoyl-L-alanine (UMA). This Thermoanaerobacter sp. (strain X514) protein is UDP-N-acetylmuramoylalanine--D-glutamate ligase.